The following is a 92-amino-acid chain: UPF0358 protein Exig_1994 (92 aa).

It belongs to the UPF0358 family.

This is UPF0358 protein Exig_1994 from Exiguobacterium sibiricum (strain DSM 17290 / CCUG 55495 / CIP 109462 / JCM 13490 / 255-15).